Here is a 508-residue protein sequence, read N- to C-terminus: General transcription factor IIF subunit 1 (508 aa).

Ala2 is subject to N-acetylalanine. A Phosphothreonine modification is found at Thr156. Residues 177–446 (MQQRRLKDQD…TPSSGDVQVT (270 aa)) are disordered. Residues Ser217, Ser218, Ser221, and Ser224 each carry the phosphoserine modification. The segment covering 232 to 251 (SKAKKKAPVTKAGRKKKKKK) has biased composition (basic residues). Composition is skewed to acidic residues over residues 255-270 (DEAF…EGQE) and 303-325 (EQSE…EEEE). Position 331 is a phosphothreonine (Thr331). The segment covering 343-355 (DDSDSSEESDIDS) has biased composition (acidic residues). The span at 364–374 (AKKKTPPKRER) shows a compositional bias: basic residues. A phosphoserine mark is found at Ser377, Ser380, Ser381, and Ser385. Polar residues predominate over residues 378-388 (GGSSKGTSRPG). At Thr389 the chain carries Phosphothreonine. Low complexity predominate over residues 389-406 (TPSAEAASTSSTLRAAAS). The residue at position 391 (Ser391) is a Phosphoserine. Residue Lys407 is modified to N6-acetyllysine. A compositionally biased stretch (polar residues) spans 428–443 (GPQSLSGKSTPSSGDV). Ser431, Ser433, and Ser436 each carry phosphoserine. Thr437 is subject to Phosphothreonine. Ser440 carries the post-translational modification Phosphoserine.

It belongs to the TFIIF alpha subunit family. In terms of assembly, heterodimer of an alpha and a beta subunit. Interacts with GTF2F2, CTDP1, TAF6/TAFII80 and URI1. Interacts with GTF2B (via C-terminus and preferentially via acetylated form); this interaction prevents binding of GTF2B to GTF2F2. Part of TBP-based Pol II pre-initiation complex (PIC), in which Pol II core assembles with general transcription factors and other specific initiation factors including GTF2E1, GTF2E2, GTF2F1, GTF2F2, TCEA1, ERCC2, ERCC3, GTF2H2, GTF2H3, GTF2H4, GTF2H5, GTF2A1, GTF2A2, GTF2B and TBP; this large multi-subunit PIC complex mediates DNA unwinding and targets Pol II core to the transcription start site where the first phosphodiester bond forms. Phosphorylated on Ser and other residues by TAF1 and casein kinase II-like kinases.

The protein resides in the nucleus. Functionally, TFIIF is a general transcription initiation factor that binds to RNA polymerase II and helps to recruit it to the initiation complex in collaboration with TFIIB. It promotes transcription elongation. This chain is General transcription factor IIF subunit 1 (Gtf2f1), found in Mus musculus (Mouse).